We begin with the raw amino-acid sequence, 225 residues long: MVLVKKYFLQRSMTKVMVDEYLAKQFYNAEYAGVEIVKTPIGTRVIIYAGRPALIIGKGGKTIKQLAQMLERYFGLDNPQITVTSVENPELNARVMAFRLAIALEKGYHFRRAAFITIRRIMNAGALGAEVIISGKLTSERAKYEKLKEGVVYKSGAFLDKIVDRAVAIAMLKPGVYGVEILITKPMKSVDKIELREQPKGPGENMVTVTNVSFIEESQKSGEQK.

A KH type-2 domain is found at 18-87; sequence VDEYLAKQFY…NPQITVTSVE (70 aa).

This sequence belongs to the universal ribosomal protein uS3 family. In terms of assembly, part of the 30S ribosomal subunit.

Binds the lower part of the 30S subunit head. In Sulfurisphaera tokodaii (strain DSM 16993 / JCM 10545 / NBRC 100140 / 7) (Sulfolobus tokodaii), this protein is Small ribosomal subunit protein uS3.